Reading from the N-terminus, the 63-residue chain is Beta-toxin NaTx36 (63 aa).

One can recognise an LCN-type CS-alpha/beta domain in the interval 1-62 (KDGYPMRSDG…VYDSATSKCR (62 aa)). 4 cysteine pairs are disulfide-bonded: Cys-11-Cys-61, Cys-15-Cys-36, Cys-22-Cys-43, and Cys-26-Cys-45.

The protein belongs to the long (4 C-C) scorpion toxin superfamily. Sodium channel inhibitor family. Beta subfamily. Expressed by the venom gland.

It is found in the secreted. Its function is as follows. Beta toxins bind sodium channels (Nav) and shift the voltage of activation towards more negative potentials thereby affecting sodium channel activation and promoting spontaneous and repetitive firing. Only when tested on grasshopper mouse channels, this toxin inhibits Nav1.8/SCN10A sodium currents in a concentration and voltage-dependent manner (IC(50)=680 nM). This toxin hyperpolarizes the voltage dependence of Nav1.8/SCN10A activation, as well as steady-state fast inactivation and slow inactivation. In contrast to most beta scorpion toxins, this toxin inhibits grasshopper mouse Nav1.8/SCN10A currents through modulation of the domain I S4 voltage sensor, and the domain II second S5-S6 extracellular pore loop. The polypeptide is Beta-toxin NaTx36 (Centruroides sculpturatus (Arizona bark scorpion)).